Here is a 314-residue protein sequence, read N- to C-terminus: Taste receptor type 2 member 42 (314 aa).

The Extracellular portion of the chain corresponds to 1-7; sequence MPTELDK. The helical transmembrane segment at 8–28 threads the bilayer; that stretch reads IFLILAIVEFIIGLLGNVFIG. At 29-50 the chain is on the cytoplasmic side; sequence LVNCSEGIKNQKVFSADFILTC. Residues 51–71 traverse the membrane as a helical segment; it reads LAISTIGQLLVILFDSFLVGL. The Extracellular portion of the chain corresponds to 72–101; that stretch reads ASHLYTTYRLGKLVILLWHMTNHLTTWLAT. A helical membrane pass occupies residues 102-122; that stretch reads CLSIFYFFKIAHFPHSLFLWL. The Cytoplasmic segment spans residues 123–127; sequence RWRMN. A helical transmembrane segment spans residues 128–148; it reads GMIVMLRTLSLFLLIFDSLVL. Residues 149–187 lie on the Extracellular side of the membrane; it reads KLFIDISLNIIDKSNLTLYFDESKTLYDKLSILKTLLSL. Asn163 carries an N-linked (GlcNAc...) asparagine glycan. Residues 188-208 traverse the membrane as a helical segment; the sequence is TSFIPFSLSLTSLLFLFLSLV. Topologically, residues 209-238 are cytoplasmic; the sequence is RHTRNLKLSSLGSRDSSTEAHRRAMKMVMS. The chain crosses the membrane as a helical span at residues 239–259; that stretch reads FLFLFIVHFFSLQVANWIFFM. Topologically, residues 260-265 are extracellular; sequence SWNNKY. The helical transmembrane segment at 266–286 threads the bilayer; that stretch reads IKFVMLALNAFPSCHSFILIL. The Cytoplasmic portion of the chain corresponds to 287 to 314; it reads GNSKLRQTAVRLLSHLRNYTKTSNPLPL.

It belongs to the G-protein coupled receptor T2R family.

The protein localises to the membrane. Its function is as follows. Receptor that may play a role in the perception of bitterness and is gustducin-linked. May play a role in sensing the chemical composition of the gastrointestinal content. The activity of this receptor may stimulate alpha gustducin, mediate PLC-beta-2 activation and lead to the gating of TRPM5. This chain is Taste receptor type 2 member 42 (TAS2R42), found in Pongo pygmaeus (Bornean orangutan).